Here is a 344-residue protein sequence, read N- to C-terminus: L-rhamnose-proton symporter (344 aa).

Helical transmembrane passes span P4–A24, W38–L58, F68–I88, M101–L121, T137–L157, L175–A195, L214–I234, L255–F275, I290–F310, and L324–V344.

The protein belongs to the L-rhamnose transporter (TC 2.A.7.6) family.

The protein localises to the cell inner membrane. The catalysed reaction is L-rhamnopyranose(in) + H(+)(in) = L-rhamnopyranose(out) + H(+)(out). Its function is as follows. Uptake of L-rhamnose across the cytoplasmic membrane with the concomitant transport of protons into the cell (symport system). In Pectobacterium atrosepticum (strain SCRI 1043 / ATCC BAA-672) (Erwinia carotovora subsp. atroseptica), this protein is L-rhamnose-proton symporter.